Consider the following 274-residue polypeptide: Rhamnulose-1-phosphate aldolase (274 aa).

Glutamate 117 is an active-site residue. Zn(2+) contacts are provided by histidine 141, histidine 143, and histidine 212.

Belongs to the aldolase class II family. RhaD subfamily. Homotetramer. Requires Zn(2+) as cofactor.

It localises to the cytoplasm. The enzyme catalyses L-rhamnulose 1-phosphate = (S)-lactaldehyde + dihydroxyacetone phosphate. Its pathway is carbohydrate degradation; L-rhamnose degradation; glycerone phosphate from L-rhamnose: step 3/3. In terms of biological role, catalyzes the reversible cleavage of L-rhamnulose-1-phosphate to dihydroxyacetone phosphate (DHAP) and L-lactaldehyde. The sequence is that of Rhamnulose-1-phosphate aldolase from Escherichia coli O127:H6 (strain E2348/69 / EPEC).